We begin with the raw amino-acid sequence, 366 residues long: tRNA/tmRNA (uracil-C(5))-methyltransferase (366 aa).

Residues Gln188, Tyr216, Asn221, Glu237, and Asp297 each coordinate S-adenosyl-L-methionine. Cys322 acts as the Nucleophile in catalysis. Residue Glu356 is the Proton acceptor of the active site.

The protein belongs to the class I-like SAM-binding methyltransferase superfamily. RNA M5U methyltransferase family. TrmA subfamily.

The catalysed reaction is uridine(54) in tRNA + S-adenosyl-L-methionine = 5-methyluridine(54) in tRNA + S-adenosyl-L-homocysteine + H(+). It carries out the reaction uridine(341) in tmRNA + S-adenosyl-L-methionine = 5-methyluridine(341) in tmRNA + S-adenosyl-L-homocysteine + H(+). Dual-specificity methyltransferase that catalyzes the formation of 5-methyluridine at position 54 (m5U54) in all tRNAs, and that of position 341 (m5U341) in tmRNA (transfer-mRNA). This Histophilus somni (strain 129Pt) (Haemophilus somnus) protein is tRNA/tmRNA (uracil-C(5))-methyltransferase.